A 133-amino-acid chain; its full sequence is UPF0102 protein bll0669 (133 aa).

It belongs to the UPF0102 family.

The polypeptide is UPF0102 protein bll0669 (Bradyrhizobium diazoefficiens (strain JCM 10833 / BCRC 13528 / IAM 13628 / NBRC 14792 / USDA 110)).